A 24-amino-acid chain; its full sequence is Hemocyanin subunit 4e (24 aa).

It belongs to the tyrosinase family. Hemocyanin subfamily. As to expression, hemolymph.

It localises to the secreted. It is found in the extracellular space. Hemocyanins are copper-containing oxygen carriers occurring freely dissolved in the hemolymph of many mollusks and arthropods. This is Hemocyanin subunit 4e from Maja squinado (Mediterranean spider crab).